The primary structure comprises 120 residues: Large ribosomal subunit protein eL34z (120 aa).

The tract at residues 31 to 51 (VYQTTKKRASGPKCPVTGKRI) is disordered.

This sequence belongs to the eukaryotic ribosomal protein eL34 family.

The sequence is that of Large ribosomal subunit protein eL34z (RPL34A) from Arabidopsis thaliana (Mouse-ear cress).